Here is a 247-residue protein sequence, read N- to C-terminus: Chloride intracellular channel protein 2 (247 aa).

Residues 1 to 94 (MSGLRPGTQV…KIEEFLEQTL (94 aa)) are N-terminal. The tract at residues 1–96 (MSGLRPGTQV…EEFLEQTLAP (96 aa)) is required for insertion into the membrane. Glutathione is bound at residue Glu25. The G-site signature appears at 30-33 (CPFC). A disulfide bridge connects residues Cys30 and Cys33. The helical transmembrane segment at 32–52 (FCQRLFMILWLKGVKFNVTTV) threads the bilayer. A GST C-terminal domain is found at 76–239 (NKELKTDFIK…PEDKEIENTY (164 aa)). The segment at 95 to 106 (APPRYPHLSPKY) is joint loop. Residues 107–247 (KESFDVGCNL…TYANVAKQKS (141 aa)) are C-terminal. Positions 151–171 (NTPLLDEIDPDSAEEPPVSRR) are foot loop. His227 is a binding site for glutathione.

This sequence belongs to the chloride channel CLIC family. Monomer. Interacts with TRAPPC2 and RYR2. As to expression, expressed in adult and fetal brain, heart, skeletal muscle, liver, lung, and spleen. Detected in adult stomach and testis. Expressed in fetal thymus and kidney.

Its subcellular location is the cytoplasm. It is found in the membrane. It carries out the reaction chloride(in) = chloride(out). It catalyses the reaction tert-butyl hydroperoxide + 2 glutathione = tert-butanol + glutathione disulfide + H2O. The enzyme catalyses cumene hydroperoxide + 2 glutathione = 2-phenylpropan-2-ol + glutathione disulfide + H2O. Its activity is regulated as follows. The channel conductance is regulated by pH. Its function is as follows. In the soluble state, catalyzes glutaredoxin-like thiol disulfide exchange reactions with reduced glutathione as electron donor. Displays weak glutathione peroxidase activity. Can insert into membranes and form chloride ion channels. Membrane insertion seems to be redox-regulated and may occur only under oxidizing conditions. Modulates the activity of RYR2 and inhibits calcium influx. The sequence is that of Chloride intracellular channel protein 2 from Homo sapiens (Human).